A 271-amino-acid polypeptide reads, in one-letter code: Energy-coupling factor transporter ATP-binding protein EcfA (271 aa).

One can recognise an ABC transporter domain in the interval 2-231 (ISIQNLTFYY…PLFLQQYKLN (230 aa)). ATP is bound at residue 34-41 (GHNGSGKS).

Belongs to the ABC transporter superfamily. Energy-coupling factor EcfA family. As to quaternary structure, forms a stable energy-coupling factor (ECF) transporter complex composed of 2 membrane-embedded substrate-binding proteins (S component), 2 ATP-binding proteins (A component) and 2 transmembrane proteins (T component).

Its subcellular location is the cell membrane. Functionally, ATP-binding (A) component of a common energy-coupling factor (ECF) ABC-transporter complex. Unlike classic ABC transporters this ECF transporter provides the energy necessary to transport a number of different substrates. This Onion yellows phytoplasma (strain OY-M) protein is Energy-coupling factor transporter ATP-binding protein EcfA.